Here is a 305-residue protein sequence, read N- to C-terminus: Type II restriction enzyme SsoII (305 aa).

It catalyses the reaction Endonucleolytic cleavage of DNA to give specific double-stranded fragments with terminal 5'-phosphates.. A P subtype restriction enzyme that recognizes the double-stranded sequence 5'-CCNGG-3' and cleaves before C-1. The chain is Type II restriction enzyme SsoII (ssoIIR) from Shigella sonnei.